A 371-amino-acid polypeptide reads, in one-letter code: Bifunctional enzyme IspD/IspF (371 aa).

The segment at 1–212 (MKDITLVLLA…FDFTPASGTI (212 aa)) is 2-C-methyl-D-erythritol 4-phosphate cytidylyltransferase. The tract at residues 213–371 (FTGNGFDVHA…NLGYFDWRKF (159 aa)) is 2-C-methyl-D-erythritol 2,4-cyclodiphosphate synthase. Residues Asp-219 and His-221 each contribute to the a divalent metal cation site. 4-CDP-2-C-methyl-D-erythritol 2-phosphate-binding positions include 219–221 (DVH) and 245–246 (HS). An a divalent metal cation-binding site is contributed by His-253. Residues 267–269 (DIG), 272–276 (FPDTD), 341–344 (STTE), Phe-348, and Arg-351 each bind 4-CDP-2-C-methyl-D-erythritol 2-phosphate.

The protein in the N-terminal section; belongs to the IspD/TarI cytidylyltransferase family. IspD subfamily. In the C-terminal section; belongs to the IspF family. A divalent metal cation serves as cofactor.

It carries out the reaction 2-C-methyl-D-erythritol 4-phosphate + CTP + H(+) = 4-CDP-2-C-methyl-D-erythritol + diphosphate. It catalyses the reaction 4-CDP-2-C-methyl-D-erythritol 2-phosphate = 2-C-methyl-D-erythritol 2,4-cyclic diphosphate + CMP. It participates in isoprenoid biosynthesis; isopentenyl diphosphate biosynthesis via DXP pathway; isopentenyl diphosphate from 1-deoxy-D-xylulose 5-phosphate: step 2/6. It functions in the pathway isoprenoid biosynthesis; isopentenyl diphosphate biosynthesis via DXP pathway; isopentenyl diphosphate from 1-deoxy-D-xylulose 5-phosphate: step 4/6. Its function is as follows. Bifunctional enzyme that catalyzes the formation of 4-diphosphocytidyl-2-C-methyl-D-erythritol from CTP and 2-C-methyl-D-erythritol 4-phosphate (MEP) (IspD), and catalyzes the conversion of 4-diphosphocytidyl-2-C-methyl-D-erythritol 2-phosphate (CDP-ME2P) to 2-C-methyl-D-erythritol 2,4-cyclodiphosphate (ME-CPP) with a corresponding release of cytidine 5-monophosphate (CMP) (IspF). This chain is Bifunctional enzyme IspD/IspF, found in Campylobacter hominis (strain ATCC BAA-381 / DSM 21671 / CCUG 45161 / LMG 19568 / NCTC 13146 / CH001A).